The sequence spans 282 residues: MARLVLELLAAALLLRVAATLRISAFNIRTFGDSKMSNQTVAGFIVSILVQYDITLVQEVRDADLSSVKKLVSQLNSASSYPYSFLSSIPLGRNSYKEQYVFIYRSDIVSVLESYYYDDGCESCGTDIFSREPFIVKFSSPTTQLDEFVIVPLHAEPSSAPAEINALTDVYTDVINKWETNNIFFMGDFNADCSYVTAEQWPSIRLRSLSSCEWLIPDSADTTVTSTDCAYDRIVACGSALRQAVEYGSATVNNFQETLRIQNKDALAISDHFPVEVTLKAR.

An N-terminal signal peptide occupies residues 1-20 (MARLVLELLAAALLLRVAAT). N-linked (GlcNAc...) asparagine glycosylation is present at Asn-38. Glu-98 is a catalytic residue. Cys-121 and Cys-124 are oxidised to a cystine. Residue His-154 is part of the active site. Cys-193 and Cys-229 are disulfide-bonded.

This sequence belongs to the DNase I family. Ca(2+) is required as a cofactor. Requires Mg(2+) as cofactor. Post-translationally, N-glycosylated.

It is found in the secreted. Its subcellular location is the zymogen granule. It localises to the nucleus envelope. It carries out the reaction Endonucleolytic cleavage to 5'-phosphodinucleotide and 5'-phosphooligonucleotide end-products.. Serum endocuclease secreted into body fluids by a wide variety of exocrine and endocrine organs. Expressed by non-hematopoietic tissues and preferentially cleaves protein-free DNA. Among other functions, seems to be involved in cell death by apoptosis. Binds specifically to G-actin and blocks actin polymerization. The chain is Deoxyribonuclease-1 (DNASE1) from Gallus gallus (Chicken).